Consider the following 217-residue polypeptide: Translation initiation factor IF-3 (217 aa).

The interval 170-217 (KKTEAMAEARQAQEARKADAKANPGKSQNAAETDDAEAEAPAEAPAEA) is disordered. Residues 172-189 (TEAMAEARQAQEARKADA) show a composition bias toward basic and acidic residues.

The protein belongs to the IF-3 family. As to quaternary structure, monomer.

It localises to the cytoplasm. Its function is as follows. IF-3 binds to the 30S ribosomal subunit and shifts the equilibrium between 70S ribosomes and their 50S and 30S subunits in favor of the free subunits, thus enhancing the availability of 30S subunits on which protein synthesis initiation begins. In Streptomyces coelicolor (strain ATCC BAA-471 / A3(2) / M145), this protein is Translation initiation factor IF-3.